A 277-amino-acid polypeptide reads, in one-letter code: Myelin proteolipid protein (277 aa).

At 2 to 10 (GLLECCARC) the chain is on the cytoplasmic side. 3 S-palmitoyl cysteine lipidation sites follow: Cys-6, Cys-7, and Cys-10. A helical transmembrane segment spans residues 11–36 (LIGAPFASLVATGLCFFGVALFCGCG). Residues 37-59 (HEALTGTEQLIETYFSKNYQDYE) are Extracellular-facing. Residues 60 to 88 (FLIDVIHGFQYFIYGTAAFFFLYGALLLA) traverse the membrane as a helical segment. Residues 89–151 (EGFYTTGAVR…LGKWLGHPDK (63 aa)) are Cytoplasmic-facing. S-palmitoyl cysteine attachment occurs at residues Cys-109, Cys-139, and Cys-141. The helical transmembrane segment at 152 to 178 (FVGITYVLTIIWLLVFACSAVPVYIYF) threads the bilayer. Residues 179–238 (NTWTTCQSIGNPTKTSASIGTLCADARMYGILPWNAFPGKVCGSNLLSICKTSEFQMTFH) lie on the Extracellular side of the membrane. Disulfide bonds link Cys-184–Cys-228 and Cys-201–Cys-220. Residue Thr-199 is the site of O-palmitoyl threonine attachment. A helical transmembrane segment spans residues 239 to 268 (LFIAAFVGAAATLVSLVTFIIATTYNFAVL). Topologically, residues 269–277 (RLMGRGTKF) are cytoplasmic.

This sequence belongs to the myelin proteolipid protein family.

It localises to the cell membrane. Its function is as follows. This is the major myelin protein from the central nervous system. It plays an important role in the formation or maintenance of the multilamellar structure of myelin. The polypeptide is Myelin proteolipid protein (PLP1) (Taeniopygia guttata (Zebra finch)).